The primary structure comprises 104 residues: Large ribosomal subunit protein uL23 (104 aa).

This sequence belongs to the universal ribosomal protein uL23 family. Part of the 50S ribosomal subunit. Contacts protein L29, and trigger factor when it is bound to the ribosome.

One of the early assembly proteins it binds 23S rRNA. One of the proteins that surrounds the polypeptide exit tunnel on the outside of the ribosome. Forms the main docking site for trigger factor binding to the ribosome. The polypeptide is Large ribosomal subunit protein uL23 (Paraburkholderia phymatum (strain DSM 17167 / CIP 108236 / LMG 21445 / STM815) (Burkholderia phymatum)).